A 29-amino-acid chain; its full sequence is GVPICGETCTLGTCYTAGCSCSWPVCTRN.

Positions 1–29 (GVPICGETCTLGTCYTAGCSCSWPVCTRN) form a cross-link, cyclopeptide (Gly-Asn). Intrachain disulfides connect C5–C19, C9–C21, and C14–C26.

Post-translationally, this is a cyclic peptide.

Probably participates in a plant defense mechanism. Has cytotoxic activity against a variety of drug-resistant and drug-sensitive human tumor cell lines. In Viola arvensis (European field pansy), this protein is Varv peptide F.